Consider the following 792-residue polypeptide: MALHNPQYIFGDFSPDEFNQFFVTPRSSVELPPYSGTLCSIQAEDELPDGQEHQRIEFGVDEVIEPSEGLPPTPSYSISSTLNPQAPEFILGCTTSKKIPEAVEKDETYSSIDQYPASALALESNSNAEAETLENDSGAGGLGQRERKKKKKRPPGYYSYLKDGGEDSASPATLVNGHATSVGTSGEAVEDAEFMDVLPPVMPRTCDSPQNPVDFISGPVPDSPFPRTLGGDARTAGLCEGCHEADFEQPCLPADSLLRTAGTQPYVGTDTTENFAVANGKILESPGEDTAANGAELHTDEGADLDPAKPESQSPPAESALSASGAIPISQPAKSWASLFHDSKPSASSPMAYVETKCSPPVPSPLASEKQMEVKEGLVPVSEDPVAIKIAELLETVTLIHKPVSLQPRGLINKGNWCYINATLQALVACPPMYHLMKFIPLYSKVQRPCTSTPMIDSFVRLMNEFTNMPVPPKPRQALGDKIVRDIRPGAAFEPTYIYRLLTVIKSSLSEKGRQEDAEEYLGFILNGLHEEMLSLKKLLSPTHEKHSVSNGPRSDLIEDEELEDTGKGSEDEWEQVGPKNKTSITRQADFVQTPITGIFGGHIRSVVYQQSSKESATLQLFFTLQLDIQSDKIRTVQDALESLVARESVQGYTTKTKQEVEVSRRVTLEKLPPVLVLHLKRFVYEKTGGCQKLVKNIDYPVDLEISRELLSPGIKNKNFKCQRTYRLFAVVYHHGNSATGGHYTTDVFQIGLNGWLRIDDQTVKVINQYQVVKPPADRTAYLLYYRRVDLL.

Position 2 is an N-acetylalanine (alanine 2). Residues 2-99 (ALHNPQYIFG…ILGCTTSKKI (98 aa)) are interaction with p53/TP53. A G3BP1-binding region spans residues 6–21 (PQYIFGDFSPDEFNQF). At threonine 24 the chain carries Phosphothreonine. Residues 126 to 164 (SNAEAETLENDSGAGGLGQRERKKKKKRPPGYYSYLKDG) are disordered. Serine 208 and serine 223 each carry phosphoserine. A compositionally biased stretch (basic and acidic residues) spans 300-309 (DEGADLDPAK). A disordered region spans residues 300-323 (DEGADLDPAKPESQSPPAESALSA). Serine 314 carries the post-translational modification Phosphoserine. Serine 330 is modified (phosphoserine; by ATM). The tract at residues 350–369 (PMAYVETKCSPPVPSPLASE) is disordered. A phosphoserine mark is found at serine 359 and serine 364. A USP domain is found at 409–789 (RGLINKGNWC…TAYLLYYRRV (381 aa)). Cysteine 418 (nucleophile) is an active-site residue. Serine 541 bears the Phosphoserine mark. Residues 542–580 (PTHEKHSVSNGPRSDLIEDEELEDTGKGSEDEWEQVGPK) form a disordered region. Threonine 566 bears the Phosphothreonine mark. Serine 570 bears the Phosphoserine mark. Residue histidine 743 is the Proton acceptor of the active site.

Belongs to the peptidase C19 family. USP10 subfamily. Found in a deubiquitination complex with TANK, USP10 and ZC3H12A; this complex inhibits genotoxic stress- or interleukin-1-beta (IL1B)-mediated NF-kappa-B activation by promoting IKBKG or TRAF6 deubiquitination. Interacts with IKBKG; this interaction increases in response to DNA damage. Interacts with TANK; this interaction increases in response to DNA damage. Interacts with TRAF6; this interaction increases in response to DNA damage. Interacts with ZC3H12A; this interaction increases in response to DNA damage. Interacts with G3BP1 (via NTF2 domain) and G3BP2 (via NTF2 domain); inhibiting stress granule formation. In terms of processing, phosphorylated by ATM following DNA damage, leading to stabilization and translocation it to the nucleus. Ubiquitinated. Deubiquitinated by USP13.

Its subcellular location is the cytoplasm. It is found in the nucleus. It localises to the early endosome. It catalyses the reaction Thiol-dependent hydrolysis of ester, thioester, amide, peptide and isopeptide bonds formed by the C-terminal Gly of ubiquitin (a 76-residue protein attached to proteins as an intracellular targeting signal).. With respect to regulation, specifically inhibited by spautin-1 (specific and potent autophagy inhibitor-1), a derivative of MBCQ that binds to USP10 and inhibits deubiquitinase activity. Regulated by PIK3C3/VPS34-containing complexes. Its function is as follows. Hydrolase that can remove conjugated ubiquitin from target proteins such as p53/TP53, RPS2/us5, RPS3/us3, RPS10/eS10, BECN1, SNX3 and CFTR. Acts as an essential regulator of p53/TP53 stability: in unstressed cells, specifically deubiquitinates p53/TP53 in the cytoplasm, leading to counteract MDM2 action and stabilize p53/TP53. Following DNA damage, translocates to the nucleus and deubiquitinates p53/TP53, leading to regulate the p53/TP53-dependent DNA damage response. Component of a regulatory loop that controls autophagy and p53/TP53 levels: mediates deubiquitination of BECN1, a key regulator of autophagy, leading to stabilize the PIK3C3/VPS34-containing complexes. In turn, PIK3C3/VPS34-containing complexes regulate USP10 stability, suggesting the existence of a regulatory system by which PIK3C3/VPS34-containing complexes regulate p53/TP53 protein levels via USP10 and USP13. Does not deubiquitinate MDM2. Plays a key role in 40S ribosome subunit recycling when a ribosome has stalled during translation: acts both by inhibiting formation of stress granules, which store stalled translation pre-initiation complexes, and mediating deubiquitination of 40S ribosome subunits. Acts as a negative regulator of stress granules formation by lowering G3BP1 and G3BP2 valence, thereby preventing G3BP1 and G3BP2 ability to undergo liquid-liquid phase separation (LLPS) and assembly of stress granules. Promotes 40S ribosome subunit recycling following ribosome dissociation in response to ribosome stalling by mediating deubiquitination of 40S ribosomal proteins RPS2/us5, RPS3/us3 and RPS10/eS10, thereby preventing their degradation by the proteasome. Part of a ribosome quality control that takes place when ribosomes have stalled during translation initiation (iRQC): USP10 acts by removing monoubiquitination of RPS2/us5 and RPS3/us3, promoting 40S ribosomal subunit recycling. Deubiquitinates CFTR in early endosomes, enhancing its endocytic recycling. Involved in a TANK-dependent negative feedback response to attenuate NF-kappa-B activation via deubiquitinating IKBKG or TRAF6 in response to interleukin-1-beta (IL1B) stimulation or upon DNA damage. Deubiquitinates TBX21 leading to its stabilization. Plays a negative role in the RLR signaling pathway upon RNA virus infection by blocking the RIGI-mediated MAVS activation. Mechanistically, removes the unanchored 'Lys-63'-linked polyubiquitin chains of MAVS to inhibit its aggregation, essential for its activation. In Mus musculus (Mouse), this protein is Ubiquitin carboxyl-terminal hydrolase 10 (Usp10).